The chain runs to 260 residues: Triosephosphate isomerase (260 aa).

11 to 13 (NWK) is a binding site for substrate. The active-site Electrophile is the His-103. Glu-175 acts as the Proton acceptor in catalysis. Substrate is bound by residues Gly-181, Ser-220, and 241–242 (GG).

The protein belongs to the triosephosphate isomerase family. As to quaternary structure, homodimer.

It localises to the cytoplasm. It catalyses the reaction D-glyceraldehyde 3-phosphate = dihydroxyacetone phosphate. It participates in carbohydrate biosynthesis; gluconeogenesis. The protein operates within carbohydrate degradation; glycolysis; D-glyceraldehyde 3-phosphate from glycerone phosphate: step 1/1. Involved in the gluconeogenesis. Catalyzes stereospecifically the conversion of dihydroxyacetone phosphate (DHAP) to D-glyceraldehyde-3-phosphate (G3P). The protein is Triosephosphate isomerase of Shewanella sediminis (strain HAW-EB3).